A 206-amino-acid chain; its full sequence is N-(5'-phosphoribosyl)anthranilate isomerase (206 aa).

Belongs to the TrpF family.

It carries out the reaction N-(5-phospho-beta-D-ribosyl)anthranilate = 1-(2-carboxyphenylamino)-1-deoxy-D-ribulose 5-phosphate. Its pathway is amino-acid biosynthesis; L-tryptophan biosynthesis; L-tryptophan from chorismate: step 3/5. This is N-(5'-phosphoribosyl)anthranilate isomerase from Citrifermentans bemidjiense (strain ATCC BAA-1014 / DSM 16622 / JCM 12645 / Bem) (Geobacter bemidjiensis).